We begin with the raw amino-acid sequence, 146 residues long: uncharacterized protein (146 aa).

2 disordered regions span residues 1–33 and 50–70; these read MATFHRAHATSSVKPRARRHQEPNSGDWPGSYR and QHWRPRSLGAGQGREDPSWEG.

This is an uncharacterized protein from Homo sapiens (Human).